The following is a 525-amino-acid chain: Putative ribose/galactose/methyl galactoside import ATP-binding protein (525 aa).

The segment at 1 to 20 (MSGSATASPPAKPDLPSSDG) is disordered. 2 ABC transporter domains span residues 33-269 (LEIS…VGRE) and 279-523 (KPAG…SGHR). Residue 65–72 (GENGAGKS) coordinates ATP.

Belongs to the ABC transporter superfamily. Carbohydrate importer 2 (CUT2) (TC 3.A.1.2) family.

The protein localises to the cell inner membrane. The enzyme catalyses D-ribose(out) + ATP + H2O = D-ribose(in) + ADP + phosphate + H(+). It catalyses the reaction D-galactose(out) + ATP + H2O = D-galactose(in) + ADP + phosphate + H(+). Its function is as follows. Part of an ABC transporter complex involved in carbohydrate import. Could be involved in ribose, galactose and/or methyl galactoside import. Responsible for energy coupling to the transport system. The polypeptide is Putative ribose/galactose/methyl galactoside import ATP-binding protein (Pseudomonas syringae pv. tomato (strain ATCC BAA-871 / DC3000)).